Reading from the N-terminus, the 455-residue chain is Bifunctional protein GlmU (455 aa).

The tract at residues 1 to 226 (MSLDIVILAA…PMEVQGANDR (226 aa)) is pyrophosphorylase. UDP-N-acetyl-alpha-D-glucosamine-binding positions include 8-11 (LAAG), lysine 22, glutamine 73, 78-79 (GT), 99-101 (YGD), glycine 136, glutamate 151, asparagine 166, and asparagine 224. Aspartate 101 is a binding site for Mg(2+). Mg(2+) is bound at residue asparagine 224. The interval 227–247 (RQLSELERHYQLREGRRLMAQ) is linker. The segment at 248–455 (GVTLRDPARF…WKRPEKIKKS (208 aa)) is N-acetyltransferase. Residues arginine 330 and lysine 348 each coordinate UDP-N-acetyl-alpha-D-glucosamine. The Proton acceptor role is filled by histidine 360. UDP-N-acetyl-alpha-D-glucosamine-binding residues include tyrosine 363 and asparagine 374. Acetyl-CoA-binding positions include alanine 377, 383-384 (NY), serine 402, alanine 420, and arginine 437.

It in the N-terminal section; belongs to the N-acetylglucosamine-1-phosphate uridyltransferase family. This sequence in the C-terminal section; belongs to the transferase hexapeptide repeat family. As to quaternary structure, homotrimer. The cofactor is Mg(2+).

Its subcellular location is the cytoplasm. It catalyses the reaction alpha-D-glucosamine 1-phosphate + acetyl-CoA = N-acetyl-alpha-D-glucosamine 1-phosphate + CoA + H(+). The catalysed reaction is N-acetyl-alpha-D-glucosamine 1-phosphate + UTP + H(+) = UDP-N-acetyl-alpha-D-glucosamine + diphosphate. It participates in nucleotide-sugar biosynthesis; UDP-N-acetyl-alpha-D-glucosamine biosynthesis; N-acetyl-alpha-D-glucosamine 1-phosphate from alpha-D-glucosamine 6-phosphate (route II): step 2/2. The protein operates within nucleotide-sugar biosynthesis; UDP-N-acetyl-alpha-D-glucosamine biosynthesis; UDP-N-acetyl-alpha-D-glucosamine from N-acetyl-alpha-D-glucosamine 1-phosphate: step 1/1. It functions in the pathway bacterial outer membrane biogenesis; LPS lipid A biosynthesis. In terms of biological role, catalyzes the last two sequential reactions in the de novo biosynthetic pathway for UDP-N-acetylglucosamine (UDP-GlcNAc). The C-terminal domain catalyzes the transfer of acetyl group from acetyl coenzyme A to glucosamine-1-phosphate (GlcN-1-P) to produce N-acetylglucosamine-1-phosphate (GlcNAc-1-P), which is converted into UDP-GlcNAc by the transfer of uridine 5-monophosphate (from uridine 5-triphosphate), a reaction catalyzed by the N-terminal domain. The protein is Bifunctional protein GlmU of Pseudomonas entomophila (strain L48).